A 391-amino-acid chain; its full sequence is 3-ketoacyl-CoA thiolase (391 aa).

Residue Cys-95 is the Acyl-thioester intermediate of the active site. Residues His-347 and Cys-377 each act as proton acceptor in the active site.

It belongs to the thiolase-like superfamily. Thiolase family. As to quaternary structure, heterotetramer of two alpha chains (FadB) and two beta chains (FadA).

Its subcellular location is the cytoplasm. The enzyme catalyses an acyl-CoA + acetyl-CoA = a 3-oxoacyl-CoA + CoA. Its pathway is lipid metabolism; fatty acid beta-oxidation. Its function is as follows. Catalyzes the final step of fatty acid oxidation in which acetyl-CoA is released and the CoA ester of a fatty acid two carbons shorter is formed. The polypeptide is 3-ketoacyl-CoA thiolase (Pseudomonas syringae pv. syringae (strain B728a)).